A 432-amino-acid polypeptide reads, in one-letter code: Acyl-CoA dehydrogenase AFT10-1 (432 aa).

The protein belongs to the acyl-CoA dehydrogenase family. Requires FAD as cofactor.

It functions in the pathway mycotoxin biosynthesis. In terms of biological role, acyl-CoA dehydrogenase; part of the gene clusters that mediate the biosynthesis of the host-selective toxins (HSTs) AF-toxins responsible for Alternaria black spot of strawberry disease by the strawberry pathotype. AF-toxin I and III are valine derivatives of 2,3-dyhydroxy-isovaleric acid and 2-hydroxy-isovaleric acid respectively, while AF II is an isoleucine derivative of 2-hydroxy-valeric acid. These derivatives are bound to a 9,10-epoxy-8-hydroxy-9-methyl-decatrienoic acid (EDA) moiety. On cellular level, AF-toxins affect plasma membrane of susceptible cells and cause a sudden increase in loss of K(+) after a few minutes of toxin treatment. The aldo-keto reductase AFTS1 catalyzes the conversion of 2-keto-isovaleric acid (2-KIV) to 2-hydroxy-isovaleric acid (2-HIV) by reduction of its ketone to an alcohol. The acyl-CoA ligase AFT1, the hydrolase AFT2 and the enoyl-CoA hydratases AFT3 and AFT6, but also the polyketide synthase AFT9, the acyl-CoA dehydrogenase AFT10, the cytochrome P450 monooxygenase AFT11 and the oxidoreductase AFT12 are all involved in the biosynthesis of the AK-, AF- and ACT-toxin common EDA structural moiety. The exact function of each enzyme, and of additional enzymes identified within the AF-toxin clusters have still to be determined. The protein is Acyl-CoA dehydrogenase AFT10-1 of Alternaria alternata (Alternaria rot fungus).